Consider the following 73-residue polypeptide: Exodeoxyribonuclease 7 small subunit (73 aa).

Belongs to the XseB family. In terms of assembly, heterooligomer composed of large and small subunits.

The protein resides in the cytoplasm. It carries out the reaction Exonucleolytic cleavage in either 5'- to 3'- or 3'- to 5'-direction to yield nucleoside 5'-phosphates.. Functionally, bidirectionally degrades single-stranded DNA into large acid-insoluble oligonucleotides, which are then degraded further into small acid-soluble oligonucleotides. The chain is Exodeoxyribonuclease 7 small subunit from Clostridium novyi (strain NT).